Here is a 459-residue protein sequence, read N- to C-terminus: Argininosuccinate lyase (459 aa).

This sequence belongs to the lyase 1 family. Argininosuccinate lyase subfamily.

The protein resides in the cytoplasm. The catalysed reaction is 2-(N(omega)-L-arginino)succinate = fumarate + L-arginine. It participates in amino-acid biosynthesis; L-arginine biosynthesis; L-arginine from L-ornithine and carbamoyl phosphate: step 3/3. The sequence is that of Argininosuccinate lyase from Staphylococcus aureus (strain USA300).